Reading from the N-terminus, the 239-residue chain is Large ribosomal subunit protein uL1 (239 aa).

This sequence belongs to the universal ribosomal protein uL1 family. Part of the 50S ribosomal subunit.

Functionally, binds directly to 23S rRNA. The L1 stalk is quite mobile in the ribosome, and is involved in E site tRNA release. Protein L1 is also a translational repressor protein, it controls the translation of the L11 operon by binding to its mRNA. This Rickettsia rickettsii (strain Iowa) protein is Large ribosomal subunit protein uL1.